The following is a 164-amino-acid chain: Transcription elongation factor GreA (164 aa).

Belongs to the GreA/GreB family.

Its function is as follows. Necessary for efficient RNA polymerase transcription elongation past template-encoded arresting sites. The arresting sites in DNA have the property of trapping a certain fraction of elongating RNA polymerases that pass through, resulting in locked ternary complexes. Cleavage of the nascent transcript by cleavage factors such as GreA or GreB allows the resumption of elongation from the new 3'terminus. GreA releases sequences of 2 to 3 nucleotides. The polypeptide is Transcription elongation factor GreA (Helicobacter pylori (strain Shi470)).